We begin with the raw amino-acid sequence, 135 residues long: RxLR effector protein PITG_02860 (135 aa).

The N-terminal stretch at 1–18 is a signal peptide; that stretch reads MRLAFLLLAVSHFICGNA. Positions 48 to 64 match the RxLR-dEER motif; it reads RKLLRTDERLSEANEER. The tract at residues 126–135 is NRL1-binding domain; sequence LKDPQAFRGP.

This sequence belongs to the RxLR effector family. Interacts with host ubiquitin E3 ligase NRL1.

It localises to the secreted. It is found in the host cytoplasm. The protein resides in the host nucleus. Its subcellular location is the host nucleoplasm. Its function is as follows. Effector that promotes P.infestans virulence and suppresses pattern-triggered immunity (PTI). Interacts with the host ubiquitin E3 ligase NRL1 and enhances the association between NRL1 and SWAP70 to promote proteasome-mediated degradation of SWAP70, which results in the suppression of immunity. In Phytophthora infestans (strain T30-4) (Potato late blight agent), this protein is RxLR effector protein PITG_02860.